Reading from the N-terminus, the 1812-residue chain is Sperm flagellar protein 2 (1812 aa).

One can recognise a Calponin-homology (CH) domain in the interval 1–105; sequence MSEILCHWLN…LLYQLYIALQ (105 aa). Coiled coils occupy residues 178–260 and 374–403; these read LENF…KDLQ and EERR…EEQA. Positions 618–630 are enriched in basic and acidic residues; the sequence is EEKASPVRQESGD. Positions 618 to 658 are disordered; it reads EEKASPVRQESGDRSQNLHNVLSAEGTPETEDETRLSTKKT. Coiled coils occupy residues 724–750, 803–827, and 868–897; these read LNQA…KKSQ, ENIN…DQIQ, and KEMF…KEEF. Residues 879–897 show a composition bias toward basic and acidic residues; the sequence is ENKAKKKSEEKEAEKKEEF. Disordered regions lie at residues 879 to 1002, 1272 to 1322, and 1793 to 1812; these read ENKA…KPGS, EEKE…APVI, and EHIQ…EEKK. Residues 902-913 are compositionally biased toward pro residues; that stretch reads ATPPTPPAPPPS. 3 stretches are compositionally biased toward basic and acidic residues: residues 914-929, 943-961, and 1272-1285; these read EPEK…ERSK, HGNR…ETSP, and EEKE…KEKP. Residues 1292–1310 are compositionally biased toward basic residues; it reads KKVKKEPPKKKREDKKGKG. Residues 1317-1669 form an interaction with IFT20 region; the sequence is ESAPVITVEE…AEKTSSFIDM (353 aa).

In terms of assembly, interacts (via C-terminus) with IFT20. Interacts with DYNC1I2. As to expression, predominantly expressed in ciliated tissues. Mainly expressed in testis, followed by trachea. Also expressed at lower level in lung, kidney and liver.

It localises to the cell projection. It is found in the cilium. The protein localises to the flagellum. Its subcellular location is the cytoplasm. The protein resides in the golgi apparatus. In terms of biological role, required for correct axoneme development in spermatozoa. Important for normal development of the manchette and sperm head morphology. Essential for male fertility. Plays a role in localization of the intraflagellar transport protein IFT20 to the manchette, suggesting function as an adapter for dynein-mediated protein transport during spermatogenesis. Also plays a role in bone growth where it seems to be required for normal osteoblast differentiation. The sequence is that of Sperm flagellar protein 2 (SPEF2) from Sus scrofa (Pig).